A 262-amino-acid polypeptide reads, in one-letter code: Acyl-[acyl-carrier-protein]--UDP-N-acetylglucosamine O-acyltransferase (262 aa).

Belongs to the transferase hexapeptide repeat family. LpxA subfamily. In terms of assembly, homotrimer.

The protein resides in the cytoplasm. The enzyme catalyses a (3R)-hydroxyacyl-[ACP] + UDP-N-acetyl-alpha-D-glucosamine = a UDP-3-O-[(3R)-3-hydroxyacyl]-N-acetyl-alpha-D-glucosamine + holo-[ACP]. Its pathway is glycolipid biosynthesis; lipid IV(A) biosynthesis; lipid IV(A) from (3R)-3-hydroxytetradecanoyl-[acyl-carrier-protein] and UDP-N-acetyl-alpha-D-glucosamine: step 1/6. In terms of biological role, involved in the biosynthesis of lipid A, a phosphorylated glycolipid that anchors the lipopolysaccharide to the outer membrane of the cell. The sequence is that of Acyl-[acyl-carrier-protein]--UDP-N-acetylglucosamine O-acyltransferase from Haemophilus influenzae (strain PittEE).